The following is a 237-amino-acid chain: Protein-S-isoprenylcysteine O-methyltransferase (237 aa).

4 helical membrane passes run 26 to 46 (SSAI…LFIF), 53 to 73 (FGIY…WVTM), 92 to 112 (FNMA…FFPS), and 116 to 136 (FSLW…RSVA). Residues Gln-149, 156-159 (HVLV), Tyr-164, and 169-172 (HPSY) each bind S-adenosyl-L-methionine. Residues 184 to 204 (VILMNPISIIGFGWASWSFFS) form a helical membrane-spanning segment. A substrate-binding site is contributed by Arg-206. Glu-210 lines the S-adenosyl-L-methionine pocket.

This sequence belongs to the class VI-like SAM-binding methyltransferase superfamily. Isoprenylcysteine carboxyl methyltransferase family.

It localises to the endoplasmic reticulum membrane. It catalyses the reaction [protein]-C-terminal S-[(2E,6E)-farnesyl]-L-cysteine + S-adenosyl-L-methionine = [protein]-C-terminal S-[(2E,6E)-farnesyl]-L-cysteine methyl ester + S-adenosyl-L-homocysteine. Its function is as follows. Methylates the C-terminal cysteine residues of small GTPases and the heterotrimeric G protein gamma subunit in response to cAMP. The methylation is required for intercellular signaling and regulation of cAMP waves propagation. It also seems to induce the activity of car1, a G protein-coupled receptor which senses extracellular cAMP during the aggregation phase of development. In Dictyostelium discoideum (Social amoeba), this protein is Protein-S-isoprenylcysteine O-methyltransferase (icmt-1).